The primary structure comprises 115 residues: Regulator of ribonuclease activity B (115 aa).

It belongs to the RraB family. In terms of assembly, interacts with the C-terminal region of Rne.

It localises to the cytoplasm. Functionally, globally modulates RNA abundance by binding to RNase E (Rne) and regulating its endonucleolytic activity. Can modulate Rne action in a substrate-dependent manner by altering the composition of the degradosome. The sequence is that of Regulator of ribonuclease activity B from Aeromonas hydrophila subsp. hydrophila (strain ATCC 7966 / DSM 30187 / BCRC 13018 / CCUG 14551 / JCM 1027 / KCTC 2358 / NCIMB 9240 / NCTC 8049).